The following is a 399-amino-acid chain: MAVTMLQDWCRWMGVNARRGLLILGIPEDCDDAEFQESLEAALRPMGHFTVLGKAFREEDNATAALVELDREVNYALVPREIPGTGGPWNVVFVPRCSGEEFLGLGRVFHFPEQEGQMVESVAGALGVGLRRVCWLRSIGQAVQPWVEAVRCQSLGVFSGRDQPAPGEESFEVWLDHTTEMLHVWQGVSERERRRRLLEGLRGTALQLVHALLAENPARTAQDCLAALAQVFGDNESQATIRVKCLTAQQQSGERLSAFVLRLEVLLQKAMEKEALARASADRVRLRQMLTRAHLTEPLDEALRKLRMAGRSPSFLEMLGLVRESEAWEASLARSVRAQTQEGAGARAGAQAVARASTKVEAVPGGPGREPEGLLQAGGQEAEELLQEGLKPVLEECDN.

Belongs to the PNMA family. As to expression, expressed in the brain.

This Homo sapiens (Human) protein is Paraneoplastic antigen-like protein 6A.